The chain runs to 223 residues: Noggin (223 aa).

An N-terminal signal peptide occupies residues 1-26 (MDHSQCLVTIYAAAVLLGLRLQQGSC). Residue Asn61 is glycosylated (N-linked (GlcNAc...) asparagine). Disulfide bonds link Cys146-Cys183, Cys169-Cys219, Cys175-Cys221, and Cys198-Cys206.

The protein belongs to the noggin family. In terms of assembly, homodimer.

It is found in the secreted. Inhibitor of bone morphogenetic proteins (BMP) signaling. Controls somitogenesis by sequestering the BMP-4 activity which in turn differentiates distinct subtypes of the mesoderm along the mediolateral axis. This is Noggin (NOG) from Gallus gallus (Chicken).